Here is a 943-residue protein sequence, read N- to C-terminus: Protein translocase subunit SecA (943 aa).

ATP-binding positions include glutamine 90, 108–112, and aspartate 509; that span reads GEGKT. The disordered stretch occupies residues 537–556; the sequence is NEHKPPIPKQRSSKSKGGFS.

The protein belongs to the SecA family. Monomer and homodimer. Part of the essential Sec protein translocation apparatus which comprises SecA, SecYEG and auxiliary proteins SecDF. Other proteins may also be involved.

The protein localises to the cell inner membrane. It localises to the cellular thylakoid membrane. It is found in the cytoplasm. The enzyme catalyses ATP + H2O + cellular proteinSide 1 = ADP + phosphate + cellular proteinSide 2.. In terms of biological role, part of the Sec protein translocase complex. Interacts with the SecYEG preprotein conducting channel. Has a central role in coupling the hydrolysis of ATP to the transfer of proteins into and across the cell membrane, serving as an ATP-driven molecular motor driving the stepwise translocation of polypeptide chains across the membrane. Functionally, probably participates in protein translocation into and across both the cytoplasmic and thylakoid membranes in cyanobacterial cells. The polypeptide is Protein translocase subunit SecA (Prochlorococcus marinus (strain MIT 9301)).